A 261-amino-acid polypeptide reads, in one-letter code: Ribosomal RNA large subunit methyltransferase E (261 aa).

S-adenosyl-L-methionine contacts are provided by glycine 81, tryptophan 83, aspartate 104, aspartate 120, and aspartate 144. Residue lysine 184 is the Proton acceptor of the active site. Residues 233 to 261 (GNALGHEVEDDGPMPHDPREDATADEDQD) form a disordered region. Over residues 245–254 (PMPHDPREDA) the composition is skewed to basic and acidic residues.

This sequence belongs to the class I-like SAM-binding methyltransferase superfamily. RNA methyltransferase RlmE family.

The protein resides in the cytoplasm. The enzyme catalyses uridine(2552) in 23S rRNA + S-adenosyl-L-methionine = 2'-O-methyluridine(2552) in 23S rRNA + S-adenosyl-L-homocysteine + H(+). Specifically methylates the uridine in position 2552 of 23S rRNA at the 2'-O position of the ribose in the fully assembled 50S ribosomal subunit. This Allorhizobium ampelinum (strain ATCC BAA-846 / DSM 112012 / S4) (Agrobacterium vitis (strain S4)) protein is Ribosomal RNA large subunit methyltransferase E.